The primary structure comprises 896 residues: MLKTIATKIFGSRNDRVLRKLNKVVKKINGLEPAFSALTDDELKAKTAEFRARLEKGESLESLMPEAFATVREASRRVLGMRHFDVQLIGGMVLTNRNIAEMRTGEGKTLTATLPCYLNALTGKGVHVVTVNDYLANRDAETNRPLFEFLGMTVGVNIPGLPPEVKRAAYQADITYATNSELGFDYLRDNLAHSKEERFQRQLHYALVDEVDSILIDEARTPLIISGPAEDSSELYIAIDKLIPLLVKQDKEDTEEYQGDGDFTLDLKTKQAHLTERGQEKCENWLIENGFMTENESLYSPAKIGLVHHIYAALRAHTLFERDVDYIVKDGEIVIVDEHTGRTMAGRRWSDGLHQAIEAKEHVKIQGENQTVASITYQNYFRLYEKLAGMTGTADTEAFEFQQIYGLETIVIPTNRPMIRDDRTDVMFESEAYKFQAIIEDIKECVARSQPVLVGTASIEKSELLSNELDKAGIPHNVLNAKFHAQEAEIIANAGYPGAVTIATNMAGRGTDIVLGGNWRAEAAKLENPTEEQLEALKAAWQERHDVVMKAGGLHIIGTERHESRRIDNQLRGRSGRQGDPGSSRFYLSLDDSLMRIYLNEGKLNMMRKAFSTPGEAMESKLLAKVIASAQAKVEAHNFDGRKNLLQFDDVANDQRHAIYAQRNDLLDHEDISETIKAIREDVYNEVIDQYIPPQSLEEQWNIAELEKRLKQDFALDLPIQQWLEEDNQLHEDNLRERIIASAVEEYQHKEEIVGAETMRNFEKGVMLQTLDELWKEHLAAMDQLRKGIHLRGYAQKDPKQEYKKESFQMFTEMLDALKLTVIRTLSRVQVRTQEEAQAEAAQQAAAESKDYADDSASGERSVAQTTQRIGRNDPCPCGSGKKYKHCHGNRAAHEA.

Residues Q87, 105–109 (GEGKT), and D512 each bind ATP. 2 disordered regions span residues 565 to 584 (RRIDNQLRGRSGRQGDPGSS) and 840 to 896 (EAAQ…AHEA). Residues C876, C878, C887, and H888 each coordinate Zn(2+). The span at 882 to 896 (KKYKHCHGNRAAHEA) shows a compositional bias: basic residues.

The protein belongs to the SecA family. As to quaternary structure, monomer and homodimer. Part of the essential Sec protein translocation apparatus which comprises SecA, SecYEG and auxiliary proteins SecDF-YajC and YidC. Zn(2+) is required as a cofactor.

Its subcellular location is the cell inner membrane. The protein resides in the cytoplasm. It carries out the reaction ATP + H2O + cellular proteinSide 1 = ADP + phosphate + cellular proteinSide 2.. Functionally, part of the Sec protein translocase complex. Interacts with the SecYEG preprotein conducting channel. Has a central role in coupling the hydrolysis of ATP to the transfer of proteins into and across the cell membrane, serving both as a receptor for the preprotein-SecB complex and as an ATP-driven molecular motor driving the stepwise translocation of polypeptide chains across the membrane. The protein is Protein translocase subunit SecA of Mannheimia succiniciproducens (strain KCTC 0769BP / MBEL55E).